Consider the following 467-residue polypeptide: Cytochrome P450 85A3 (467 aa).

A helical transmembrane segment spans residues 2 to 22; the sequence is AIFLIIFVVFFGFCILSTPLF. Residue Cys-417 participates in heme binding.

Belongs to the cytochrome P450 family. The cofactor is heme. As to expression, expressed in fruits.

It localises to the membrane. The catalysed reaction is 6-deoxocastasterone + reduced [NADPH--hemoprotein reductase] + O2 = 6alpha-hydroxycastasterone + oxidized [NADPH--hemoprotein reductase] + H2O + H(+). The enzyme catalyses 6alpha-hydroxycastasterone + reduced [NADPH--hemoprotein reductase] + O2 = castasterone + oxidized [NADPH--hemoprotein reductase] + 2 H2O + H(+). It catalyses the reaction castasterone + reduced [NADPH--hemoprotein reductase] + O2 = brassinolide + oxidized [NADPH--hemoprotein reductase] + H2O + H(+). It carries out the reaction 6-deoxocastasterone + 2 reduced [NADPH--hemoprotein reductase] + 2 O2 = castasterone + 2 oxidized [NADPH--hemoprotein reductase] + 3 H2O + 2 H(+). It functions in the pathway plant hormone biosynthesis; brassinosteroid biosynthesis. Its function is as follows. Catalyzes the C6-oxidation step in brassinosteroids biosynthesis. Converts 6-deoxocastasterone (6-deoxoCS) to castasterone (CS), and castasterone (CS) to brassinolide (BL). In Solanum lycopersicum (Tomato), this protein is Cytochrome P450 85A3.